The following is a 456-amino-acid chain: uncharacterized protein (456 aa).

A run of 11 helical transmembrane segments spans residues 12–32, 63–83, 86–106, 143–163, 179–199, 208–228, 237–257, 305–325, 348–368, 390–410, and 414–434; these read SFIW…YLTL, FAAL…VGVA, VQAG…LGMA, WLAK…IGTF, IPVL…ILGG, SVIV…IILL, ILLI…AVGL, FLDT…TGAW, IGAT…ILGW, LAYI…IWII, and VNGL…KVII.

Belongs to the alanine or glycine:cation symporter (AGCS) (TC 2.A.25) family.

It is found in the cell inner membrane. This is an uncharacterized protein from Haemophilus influenzae (strain ATCC 51907 / DSM 11121 / KW20 / Rd).